The following is a 430-amino-acid chain: Sesquiterpene synthase Agr5 (430 aa).

An N-terminal signal peptide occupies residues 1–25; that stretch reads MASSLLEPSLAAIALVILLASVSLS. Asparagine 113 is a glycosylation site (N-linked (GlcNAc...) asparagine). Mg(2+)-binding residues include aspartate 176, asparagine 311, serine 315, and glutamate 319. Residues 176 to 180 carry the DDXXD motif motif; the sequence is DEYTD. (2E,6E)-farnesyl diphosphate contacts are provided by arginine 401 and tyrosine 402.

Belongs to the terpene synthase family. Mg(2+) is required as a cofactor.

The enzyme catalyses (2E,6E)-farnesyl diphosphate = viridiflorene + diphosphate. In terms of biological role, terpene cyclase that catalyzes the cyclization of farnesyl diphosphate (FPP) to viridiflorene and viridiflorol. In Cyclocybe aegerita (Black poplar mushroom), this protein is Sesquiterpene synthase Agr5.